The chain runs to 1491 residues: Chromosome partition protein MukB (1491 aa).

ATP is bound at residue 34-41 (GGNGAGKS). 5 coiled-coil regions span residues 302–450 (LIEQ…LKAE), 490–600 (ARSE…RFES), 781–806 (RAAR…AKAS), 836–1109 (EQAL…DLRT), and 1210–1239 (VEAI…ISSD). A flexible hinge region spans residues 667–784 (PGGSNDPRLK…AIPLFGRAAR (118 aa)). The tract at residues 1059 to 1080 (QRRRDELQERLHTSRSRKSEYE) is disordered.

Belongs to the SMC family. MukB subfamily. In terms of assembly, homodimerization via its hinge domain. Binds to DNA via its C-terminal region. Interacts, and probably forms a ternary complex, with MukE and MukF via its C-terminal region. The complex formation is stimulated by calcium or magnesium. Interacts with tubulin-related protein FtsZ.

It is found in the cytoplasm. The protein localises to the nucleoid. Plays a central role in chromosome condensation, segregation and cell cycle progression. Functions as a homodimer, which is essential for chromosome partition. Involved in negative DNA supercoiling in vivo, and by this means organize and compact chromosomes. May achieve or facilitate chromosome segregation by condensation DNA from both sides of a centrally located replisome during cell division. The polypeptide is Chromosome partition protein MukB (Vibrio cholerae serotype O1 (strain ATCC 39315 / El Tor Inaba N16961)).